The sequence spans 544 residues: BTB/POZ domain-containing protein At2g13690 (544 aa).

2 disordered regions span residues 34–66 and 82–111; these read ASPD…PQSS and LSPG…EEDD. Residues 37-55 show a composition bias toward polar residues; it reads DTRSISSRNHIPAKSQQQR. Residues 93 to 103 show a composition bias toward low complexity; the sequence is DPTVTTMQETE. Positions 142-225 constitute a BTB domain; sequence YDARLSLKGR…MFEESNVIIK (84 aa).

Its pathway is protein modification; protein ubiquitination. In terms of biological role, may act as a substrate-specific adapter of an E3 ubiquitin-protein ligase complex (CUL3-RBX1-BTB) which mediates the ubiquitination and subsequent proteasomal degradation of target proteins. This Arabidopsis thaliana (Mouse-ear cress) protein is BTB/POZ domain-containing protein At2g13690 (PRL1-IFG).